Consider the following 912-residue polypeptide: E3 ubiquitin-protein ligase HACE1 (912 aa).

ANK repeat units follow at residues 23 to 55, 64 to 93, 97 to 126, 130 to 159, 163 to 192, 196 to 226, and 228 to 253; these read LPED…NSKF, VKRS…DPNY, SGCT…DVNI, EGLT…NVDV, MGQT…DINR, SGAT…YLPD, and NGVT…QHHP. Positions 577 to 912 constitute an HECT domain; the sequence is NCEKLKQGIA…HCGSYGYTMA (336 aa). C879 acts as the Glycyl thioester intermediate in catalysis.

Its subcellular location is the golgi apparatus. It is found in the golgi stack membrane. The protein resides in the cytoplasm. It localises to the endoplasmic reticulum. It catalyses the reaction S-ubiquitinyl-[E2 ubiquitin-conjugating enzyme]-L-cysteine + [acceptor protein]-L-lysine = [E2 ubiquitin-conjugating enzyme]-L-cysteine + N(6)-ubiquitinyl-[acceptor protein]-L-lysine.. Its pathway is protein modification; protein ubiquitination. In terms of biological role, E3 ubiquitin-protein ligase involved in Golgi membrane fusion and regulation of small GTPases. Acts as a regulator of Golgi membrane dynamics during the cell cycle: recruited to Golgi membrane by Rab proteins and regulates postmitotic Golgi membrane fusion. Acts by mediating ubiquitination during mitotic Golgi disassembly, ubiquitination serving as a signal for Golgi reassembly later, after cell division. The chain is E3 ubiquitin-protein ligase HACE1 (hace1) from Xenopus tropicalis (Western clawed frog).